Reading from the N-terminus, the 309-residue chain is NAD-dependent protein deacylase sirtuin-5, mitochondrial (309 aa).

A mitochondrion-targeting transit peptide spans 1–35; that stretch reads MILLPFHTRRLVSHVYCGLKPASKKKGIALEMARP. The Deacetylase sirtuin-type domain occupies 36–306; sequence SSNLADFREA…PPAIARHETE (271 aa). Residue 57–76 participates in NAD(+) binding; it reads GAGVSAESGVPTFRGAGGYW. The substrate site is built by Tyr-101 and Arg-104. An NAD(+)-binding site is contributed by 139-142; that stretch reads QNID. His-157 functions as the Proton acceptor in the catalytic mechanism. Residues Cys-165, Cys-168, Cys-206, and Cys-211 each coordinate Zn(2+). Residues 248–250, 274–276, and Cys-292 contribute to the NAD(+) site; these read GTS and NME.

This sequence belongs to the sirtuin family. Class III subfamily. It depends on Zn(2+) as a cofactor.

The protein localises to the mitochondrion. It localises to the cytoplasm. It is found in the cytosol. The protein resides in the nucleus. It carries out the reaction N(6)-malonyl-L-lysyl-[protein] + NAD(+) + H2O = 2''-O-malonyl-ADP-D-ribose + nicotinamide + L-lysyl-[protein]. It catalyses the reaction N(6)-succinyl-L-lysyl-[protein] + NAD(+) + H2O = 2''-O-succinyl-ADP-D-ribose + nicotinamide + L-lysyl-[protein]. The catalysed reaction is N(6)-glutaryl-L-lysyl-[protein] + NAD(+) + H2O = 2''-O-glutaryl-ADP-D-ribose + nicotinamide + L-lysyl-[protein]. Its function is as follows. NAD-dependent lysine demalonylase, desuccinylase and deglutarylase that specifically removes malonyl, succinyl and glutaryl groups on target proteins. Has weak NAD-dependent protein deacetylase activity; however this activity may not be physiologically relevant in vivo. This Xenopus tropicalis (Western clawed frog) protein is NAD-dependent protein deacylase sirtuin-5, mitochondrial (sirt5).